Reading from the N-terminus, the 201-residue chain is Glycerol-3-phosphate acyltransferase (201 aa).

Transmembrane regions (helical) follow at residues 10–30, 59–79, 87–107, 116–136, and 161–181; these read ALIL…GIVI, PAAL…VLIA, AAQL…WLGF, FLGT…LTWL, and ILLG…LIFI.

It belongs to the PlsY family. In terms of assembly, probably interacts with PlsX.

It localises to the cell inner membrane. It carries out the reaction an acyl phosphate + sn-glycerol 3-phosphate = a 1-acyl-sn-glycero-3-phosphate + phosphate. It participates in lipid metabolism; phospholipid metabolism. Catalyzes the transfer of an acyl group from acyl-phosphate (acyl-PO(4)) to glycerol-3-phosphate (G3P) to form lysophosphatidic acid (LPA). This enzyme utilizes acyl-phosphate as fatty acyl donor, but not acyl-CoA or acyl-ACP. The polypeptide is Glycerol-3-phosphate acyltransferase (Cereibacter sphaeroides (strain ATCC 17029 / ATH 2.4.9) (Rhodobacter sphaeroides)).